The following is a 484-amino-acid chain: Sushi domain-containing protein 4 (484 aa).

The first 35 residues, 1 to 35, serve as a signal peptide directing secretion; sequence MFHHADKGGKKSAFGHPVCGQIILSIILLRPPLLV. Sushi domains lie at 46–110, 111–168, 169–230, and 232–295; these read QICK…VCLS, EDCL…QPTC, QGCL…RCLD, and EACS…YCVK. 8 cysteine pairs are disulfide-bonded: cysteine 48-cysteine 90, cysteine 76-cysteine 108, cysteine 113-cysteine 156, cysteine 138-cysteine 168, cysteine 171-cysteine 215, cysteine 201-cysteine 228, cysteine 234-cysteine 280, and cysteine 265-cysteine 293. Residues asparagine 95 and asparagine 125 are each glycosylated (N-linked (GlcNAc...) asparagine). The N-linked (GlcNAc...) asparagine glycan is linked to asparagine 183. The helical transmembrane segment at 311-331 threads the bilayer; sequence WKVVACTATSVLLALLLVITA. A disordered region spans residues 374-484; that stretch reads SGNYCQPPND…PLVEDGEEDC (111 aa). Polar residues-rich tracts occupy residues 424-442 and 449-467; these read DSLSDTSECLQGLQPSSSH and SEKTNAITSMEETASTSPS. Acidic residues predominate over residues 470–484; the sequence is IADEIPLVEDGEEDC.

The protein resides in the membrane. This is Sushi domain-containing protein 4 (susd4) from Danio rerio (Zebrafish).